We begin with the raw amino-acid sequence, 100 residues long: uncharacterized protein (100 aa).

3 consecutive transmembrane segments (helical) span residues 9-29 (VYTY…SWVV), 41-61 (PYLI…ITAP), and 72-92 (SIPF…FLGI).

The protein resides in the membrane. This is an uncharacterized protein from Saccharomyces cerevisiae (strain ATCC 204508 / S288c) (Baker's yeast).